Consider the following 102-residue polypeptide: Cytochrome c oxidase subunit 6a, mitochondrial (102 aa).

Residues methionine 1 to aspartate 36 constitute a mitochondrion transit peptide.

Belongs to the cytochrome c oxidase subunit 6A (TC 3.D.4.11) family.

It is found in the mitochondrion inner membrane. In terms of biological role, this protein is one of the nuclear-coded polypeptide chains of cytochrome c oxidase, the terminal oxidase in mitochondrial electron transport. The chain is Cytochrome c oxidase subunit 6a, mitochondrial (COX6A) from Arabidopsis thaliana (Mouse-ear cress).